The sequence spans 424 residues: Testican-2 (424 aa).

The first 22 residues, 1–22 (MRAPGCGRLVLPLLLLAAAALA), serve as a signal peptide directing secretion. A Phosphoserine; by FAM20C modification is found at S72. 5 cysteine pairs are disulfide-bonded: C90/C101, C95/C111, C136/C166, C139/C159, and C148/C180. One can recognise a Kazal-like domain in the interval 130-182 (GNKDSICKPCHMAQLASVCGSDGHTYSSVCKLEQQACLSSKQLAVRCEGPCPC). The N-linked (GlcNAc...) asparagine glycan is linked to N225. The Thyroglobulin type-1 domain maps to 310-376 (KPPCLAELER…GTRTHGSPDC (67 aa)). 3 cysteine pairs are disulfide-bonded: C313-C337, C348-C355, and C357-C376. O-linked (Xyl...) (glycosaminoglycan) serine glycosylation is found at S383 and S388. The interval 387 to 424 (GSGVGWEDEEEKETEEAGEEAEEEEGEAGEADDGGYIW) is disordered. The segment covering 392 to 424 (WEDEEEKETEEAGEEAEEEEGEAGEADDGGYIW) has biased composition (acidic residues).

Post-translationally, contains chondroitin sulfate and heparan sulfate O-linked oligosaccharides. As to expression, highly expressed in brain. Also found in lung and testis.

Its subcellular location is the secreted. It is found in the extracellular space. It localises to the extracellular matrix. Functionally, may participate in diverse steps of neurogenesis. Binds calcium. The sequence is that of Testican-2 (SPOCK2) from Homo sapiens (Human).